We begin with the raw amino-acid sequence, 136 residues long: Large ribosomal subunit protein uL16 (136 aa).

The protein belongs to the universal ribosomal protein uL16 family. In terms of assembly, part of the 50S ribosomal subunit.

In terms of biological role, binds 23S rRNA and is also seen to make contacts with the A and possibly P site tRNAs. The sequence is that of Large ribosomal subunit protein uL16 from Rickettsia bellii (strain OSU 85-389).